The sequence spans 936 residues: Probable outer membrane protein pmp7 (936 aa).

Positions 1 to 23 are cleaved as a signal peptide; the sequence is MKSSVSWLFFSSIPLFSSLSIVA. Residues 636–936 enclose the Autotransporter domain; the sequence is GEPFERELWL…NTNLGSKFCF (301 aa).

Belongs to the PMP outer membrane protein family.

It localises to the secreted. Its subcellular location is the cell wall. It is found in the cell outer membrane. In Chlamydia pneumoniae (Chlamydophila pneumoniae), this protein is Probable outer membrane protein pmp7 (pmp7).